Here is an 84-residue protein sequence, read N- to C-terminus: Small ribosomal subunit protein uS17 (84 aa).

This sequence belongs to the universal ribosomal protein uS17 family. In terms of assembly, part of the 30S ribosomal subunit.

Functionally, one of the primary rRNA binding proteins, it binds specifically to the 5'-end of 16S ribosomal RNA. This is Small ribosomal subunit protein uS17 from Clostridium acetobutylicum (strain ATCC 824 / DSM 792 / JCM 1419 / IAM 19013 / LMG 5710 / NBRC 13948 / NRRL B-527 / VKM B-1787 / 2291 / W).